The following is a 306-amino-acid chain: MAAVDDLQFEEFGNAATSLTANPDATTVNIEDPGETPKHQPGSPRGSGREEDDELLGNDDSDKTELLAGQKKSSPFWTFEYYQTFFDVDTYQVFDRIKGSLLPIPGKNFVRLYIRSNPDLYGPFWICATLVFAIAISGNLSNFLIHLGEKTYHYVPEFRKVSIAATIIYAYAWLVPLALWGFLMWRNSKVMNIVSYSFLEIVCVYGYSLFIYIPTAILWIIPQKAVRWILVMIALGISGSLLAMTFWPAVREDNRRVALATIVTIVLLHMLLSVGCLAYFFDAPEMDHLPTTTATPNQTVAAAKSS.

The Cytoplasmic segment spans residues 1–119 (MAAVDDLQFE…VRLYIRSNPD (119 aa)). The tract at residues 14–62 (NAATSLTANPDATTVNIEDPGETPKHQPGSPRGSGREEDDELLGNDDSD) is disordered. Polar residues predominate over residues 15 to 29 (AATSLTANPDATTVN). A compositionally biased stretch (acidic residues) spans 50-59 (EEDDELLGND). Residues 120 to 140 (LYGPFWICATLVFAIAISGNL) form a helical membrane-spanning segment. Residues 141-162 (SNFLIHLGEKTYHYVPEFRKVS) are Lumenal-facing. A helical membrane pass occupies residues 163–183 (IAATIIYAYAWLVPLALWGFL). The Cytoplasmic portion of the chain corresponds to 184-200 (MWRNSKVMNIVSYSFLE). The helical transmembrane segment at 201–221 (IVCVYGYSLFIYIPTAILWII) threads the bilayer. Topologically, residues 222-227 (PQKAVR) are lumenal. The helical transmembrane segment at 228–248 (WILVMIALGISGSLLAMTFWP) threads the bilayer. The Cytoplasmic portion of the chain corresponds to 249-256 (AVREDNRR). Residues 257–277 (VALATIVTIVLLHMLLSVGCL) form a helical membrane-spanning segment. Residues 278 to 306 (AYFFDAPEMDHLPTTTATPNQTVAAAKSS) lie on the Lumenal side of the membrane. Asparagine 297 carries N-linked (GlcNAc...) asparagine glycosylation.

It belongs to the YIP1 family. In terms of assembly, interacts with YIPF6; this interaction may stabilize YIPF1. May also form a ternary complex with YIPF2 and YIPF6.

It localises to the golgi apparatus. Its subcellular location is the cis-Golgi network membrane. The protein resides in the trans-Golgi network membrane. It is found in the late endosome membrane. The protein is Protein YIPF1 (YIPF1) of Homo sapiens (Human).